Reading from the N-terminus, the 455-residue chain is Beta-1,4-mannosyltransferase bre-3 (455 aa).

It belongs to the glycosyltransferase 2 family. As to expression, endothelial cells.

The protein resides in the cytoplasm. The protein operates within protein modification; protein glycosylation. In terms of biological role, glycosyltransferase with a proposed role in glycosphingolipid biosynthesis. Involved in susceptibility to pore-forming crystal toxins in conjunction with bre-1, bre-2, bre-4 and bre-5. Involved in resistance to the nematotoxic C.cinerea galectin Cgl2. Has a role in determining brood size. The protein is Beta-1,4-mannosyltransferase bre-3 (bre-3) of Caenorhabditis elegans.